Here is a 726-residue protein sequence, read N- to C-terminus: Catalase-peroxidase (726 aa).

Residues 1 to 33 are disordered; that stretch reads MSTTDDTHNTLSTGKCPFHQGGHDRSAGAGTAS. The tryptophyl-tyrosyl-methioninium (Trp-Tyr) (with M-252) cross-link spans 105–226; it reads WHGAGTYRSI…LGATEMGLIY (122 aa). Catalysis depends on histidine 106, which acts as the Proton acceptor. Positions 226–252 form a cross-link, tryptophyl-tyrosyl-methioninium (Tyr-Met) (with W-105); the sequence is YVNPEGPDHSGEPLSAAAAIRATFGNM. Histidine 267 contributes to the heme b binding site.

It belongs to the peroxidase family. Peroxidase/catalase subfamily. Homodimer or homotetramer. It depends on heme b as a cofactor. Formation of the three residue Trp-Tyr-Met cross-link is important for the catalase, but not the peroxidase activity of the enzyme.

It carries out the reaction H2O2 + AH2 = A + 2 H2O. The catalysed reaction is 2 H2O2 = O2 + 2 H2O. Functionally, bifunctional enzyme with both catalase and broad-spectrum peroxidase activity. This chain is Catalase-peroxidase, found in Salmonella paratyphi A (strain ATCC 9150 / SARB42).